A 207-amino-acid chain; its full sequence is Nuclear transcription factor Y subunit beta (207 aa).

The a domain stretch occupies residues 1 to 52 (MTMDGDSSTTDASQLGISADYIGGSHYVIQPHDDTEDSMNDHEDTNGSKESF). The segment at 27–52 (YVIQPHDDTEDSMNDHEDTNGSKESF) is disordered. Basic and acidic residues predominate over residues 39-52 (MNDHEDTNGSKESF). The segment at 53–142 (REQDIYLPIA…PLKLYLQKFR (90 aa)) is b domain. A DNA-binding region spans residues 59 to 65 (LPIANVA). A subunit association domain (SAD) region spans residues 86 to 97 (VQECVSEFISFI). A Glycyl lysine isopeptide (Lys-Gly) (interchain with G-Cter in ubiquitin) cross-link involves residue Lys-140. Residues 143–207 (EAMKGEKGIG…ISGVQQIQFS (65 aa)) form a c domain region.

It belongs to the NFYB/HAP3 subunit family. As to quaternary structure, heterotrimeric transcription factor composed of three components, NF-YA, NF-YB and NF-YC. NF-YB and NF-YC must interact and dimerize for NF-YA association and DNA binding. Interacts with C1QBP. In terms of processing, monoubiquitination at Lys-140 plays an important role in transcriptional activation by allowing the deposition of histone H3 methylations as well as histone H2B monoubiquitination at 'Lys-121'.

It localises to the nucleus. Functionally, component of the sequence-specific heterotrimeric transcription factor (NF-Y) which specifically recognizes a 5'-CCAAT-3' box motif found in the promoters of its target genes. NF-Y can function as both an activator and a repressor, depending on its interacting cofactors. The polypeptide is Nuclear transcription factor Y subunit beta (NFYB) (Homo sapiens (Human)).